We begin with the raw amino-acid sequence, 252 residues long: MLSATQPVSENLPAHGCRHVAIIMDGNGRWAKKQGKIRAFGHKAGAKSVRRAVSFAANNGIDALTLYAFSSENWNRPAQEVSALMELFVWALDSEVKSLHRHNVRLRIIGDISRFNSRLQERIRKSEALTAHNTGLTLNIAANYGGRWDIVQGVRQLAEQVQAGVLRPDQIDEERLGQQICMHELAPVDLVIRTGGEHRISNFLLWQIAYAELYFTDVLWPDFDEQDFEGALHAFANRERRFGGTEPGDDKA.

Asp-25 is an active-site residue. Asp-25 is a Mg(2+) binding site. Substrate is bound by residues 26–29 (GNGR), Trp-30, Arg-38, His-42, and 70–72 (SSE). The active-site Proton acceptor is the Asn-73. The substrate site is built by Trp-74, Arg-76, and Arg-193. His-198 lines the Mg(2+) pocket. 199-201 (RIS) is a substrate binding site. Glu-212 serves as a coordination point for Mg(2+).

It belongs to the UPP synthase family. As to quaternary structure, homodimer. The cofactor is Mg(2+).

The enzyme catalyses 8 isopentenyl diphosphate + (2E,6E)-farnesyl diphosphate = di-trans,octa-cis-undecaprenyl diphosphate + 8 diphosphate. Functionally, catalyzes the sequential condensation of isopentenyl diphosphate (IPP) with (2E,6E)-farnesyl diphosphate (E,E-FPP) to yield (2Z,6Z,10Z,14Z,18Z,22Z,26Z,30Z,34E,38E)-undecaprenyl diphosphate (di-trans,octa-cis-UPP). UPP is the precursor of glycosyl carrier lipid in the biosynthesis of bacterial cell wall polysaccharide components such as peptidoglycan and lipopolysaccharide. The sequence is that of Ditrans,polycis-undecaprenyl-diphosphate synthase ((2E,6E)-farnesyl-diphosphate specific) from Salmonella paratyphi A (strain ATCC 9150 / SARB42).